Consider the following 235-residue polypeptide: Large ribosomal subunit protein uL1 (235 aa).

Belongs to the universal ribosomal protein uL1 family. In terms of assembly, part of the 50S ribosomal subunit.

Functionally, binds directly to 23S rRNA. The L1 stalk is quite mobile in the ribosome, and is involved in E site tRNA release. Protein L1 is also a translational repressor protein, it controls the translation of the L11 operon by binding to its mRNA. This Mycolicibacterium smegmatis (strain ATCC 700084 / mc(2)155) (Mycobacterium smegmatis) protein is Large ribosomal subunit protein uL1.